The chain runs to 246 residues: Major prion protein (246 aa).

The N-terminal stretch at Met1–Cys15 is a signal peptide. Residues Lys16–Ser223 are interaction with GRB2, ERI3 and SYN1. The disordered stretch occupies residues Arg18 to Met102. A run of 5 repeats spans residues Pro44–Gln52, Pro53–Gln60, Pro61–Gln68, Pro69–Gln76, and Pro77–Gln84. The interval Pro44 to Gln84 is 5 X 8 AA tandem repeats of P-H-G-G-G-W-G-Q. Positions Gln45–Thr88 are enriched in gly residues. Cu(2+) contacts are provided by His54, Gly55, Gly56, His62, Gly63, Gly64, His70, Gly71, Gly72, His78, Gly79, and Gly80. Residues Gln91–Met102 are compositionally biased toward basic residues. An intrachain disulfide couples Cys172 to Cys207. Residues Asn174 and Asn190 are each glycosylated (N-linked (GlcNAc...) asparagine). A lipid anchor (GPI-anchor amidated serine) is attached at Ser223. The propeptide at Ser224–Gly246 is removed in mature form.

Belongs to the prion family. Monomer and homodimer. Has a tendency to aggregate into amyloid fibrils containing a cross-beta spine, formed by a steric zipper of superposed beta-strands. Soluble oligomers may represent an intermediate stage on the path to fibril formation. Copper binding may promote oligomerization. Interacts with GRB2, APP, ERI3/PRNPIP and SYN1. Mislocalized cytosolically exposed PrP interacts with MGRN1; this interaction alters MGRN1 subcellular location and causes lysosomal enlargement. Interacts with KIAA1191.

The protein localises to the cell membrane. Its subcellular location is the golgi apparatus. Its function is as follows. Its primary physiological function is unclear. Has cytoprotective activity against internal or environmental stresses. May play a role in neuronal development and synaptic plasticity. May be required for neuronal myelin sheath maintenance. May play a role in iron uptake and iron homeostasis. Soluble oligomers are toxic to cultured neuroblastoma cells and induce apoptosis (in vitro). Association with GPC1 (via its heparan sulfate chains) targets PRNP to lipid rafts. Also provides Cu(2+) or Zn(2+) for the ascorbate-mediated GPC1 deaminase degradation of its heparan sulfate side chains. The sequence is that of Major prion protein (PRNP) from Cercocebus atys (Sooty mangabey).